A 255-amino-acid chain; its full sequence is Imidazole glycerol phosphate synthase subunit HisF (255 aa).

Residues aspartate 11 and aspartate 130 contribute to the active site.

It belongs to the HisA/HisF family. Heterodimer of HisH and HisF.

It localises to the cytoplasm. It carries out the reaction 5-[(5-phospho-1-deoxy-D-ribulos-1-ylimino)methylamino]-1-(5-phospho-beta-D-ribosyl)imidazole-4-carboxamide + L-glutamine = D-erythro-1-(imidazol-4-yl)glycerol 3-phosphate + 5-amino-1-(5-phospho-beta-D-ribosyl)imidazole-4-carboxamide + L-glutamate + H(+). It participates in amino-acid biosynthesis; L-histidine biosynthesis; L-histidine from 5-phospho-alpha-D-ribose 1-diphosphate: step 5/9. Functionally, IGPS catalyzes the conversion of PRFAR and glutamine to IGP, AICAR and glutamate. The HisF subunit catalyzes the cyclization activity that produces IGP and AICAR from PRFAR using the ammonia provided by the HisH subunit. In Campylobacter jejuni subsp. jejuni serotype O:6 (strain 81116 / NCTC 11828), this protein is Imidazole glycerol phosphate synthase subunit HisF.